A 110-amino-acid polypeptide reads, in one-letter code: Waprin-Thr1 (110 aa).

The signal sequence occupies residues 1–20; that stretch reads MYKKGTILVLAYLLIATAVC. The region spanning 22–68 is the WAP domain; it reads LSYKEGHCPLRNSVSKCIPRCVSDYQCSFNEKCCPNKCGSESCVQAS. Cystine bridges form between Cys-29–Cys-55, Cys-38–Cys-59, Cys-42–Cys-54, and Cys-48–Cys-64.

It belongs to the venom waprin family. Cys-rich waprin subfamily. Expressed by the venom gland.

It localises to the secreted. Its function is as follows. Antimicrobial peptides with activity against Gram-positive and Gram-negative bacteria as well as fungi. Recognizes carbohydrates in the microbial cell walls, and induces structural damage to them. Also inhibits microbial serine proteases subtilisin A and proteinase K, as well as human and porcine elastases. Carbohydrates that are recognized are LPS, mannan, peptidoglycan, and N-acetl-D-glucosamine. The polypeptide is Waprin-Thr1 (Apis mellifera (Honeybee)).